Here is an 83-residue protein sequence, read N- to C-terminus: Cell division topological specificity factor (83 aa).

It belongs to the MinE family.

Functionally, prevents the cell division inhibition by proteins MinC and MinD at internal division sites while permitting inhibition at polar sites. This ensures cell division at the proper site by restricting the formation of a division septum at the midpoint of the long axis of the cell. This Pseudoalteromonas atlantica (strain T6c / ATCC BAA-1087) protein is Cell division topological specificity factor.